Here is a 235-residue protein sequence, read N- to C-terminus: MSLDPRGALVLFSGGQDSTACLAWALEHHAHVETIGFDYGQRHVVELECRVQVREAIARSFPLWAGRLANDHVLDLGLLGQISDTALTSARAIEMQANGLPSTFVPGRNLLFLGFAATVAYRRNLSVLVGGMCETDYSGYPDCRDNTLKALQVALSLGMATPMTIETPLMWLDKARTWALTDRLGGRALNELILEHTHSCYLGDRSVRHAWGYGCNACPACELRRKGYEAWCAGA.

Position 12–22 (12–22) interacts with ATP; that stretch reads FSGGQDSTACL. Zn(2+)-binding residues include cysteine 200, cysteine 215, cysteine 218, and cysteine 221.

Belongs to the QueC family. Requires Zn(2+) as cofactor.

The catalysed reaction is 7-carboxy-7-deazaguanine + NH4(+) + ATP = 7-cyano-7-deazaguanine + ADP + phosphate + H2O + H(+). The protein operates within purine metabolism; 7-cyano-7-deazaguanine biosynthesis. Catalyzes the ATP-dependent conversion of 7-carboxy-7-deazaguanine (CDG) to 7-cyano-7-deazaguanine (preQ(0)). The sequence is that of 7-cyano-7-deazaguanine synthase from Methylibium petroleiphilum (strain ATCC BAA-1232 / LMG 22953 / PM1).